Here is a 407-residue protein sequence, read N- to C-terminus: Argininosuccinate synthase (407 aa).

Residues 16–24 (AYSGGLDTS) and A44 contribute to the ATP site. L-citrulline-binding residues include Y96 and S101. G126 lines the ATP pocket. 3 residues coordinate L-aspartate: T128, N132, and D133. Residue N132 coordinates L-citrulline. The L-citrulline site is built by R136, S185, S194, E270, and Y282.

Belongs to the argininosuccinate synthase family. Type 1 subfamily. In terms of assembly, homotetramer.

Its subcellular location is the cytoplasm. It carries out the reaction L-citrulline + L-aspartate + ATP = 2-(N(omega)-L-arginino)succinate + AMP + diphosphate + H(+). Its pathway is amino-acid biosynthesis; L-arginine biosynthesis; L-arginine from L-ornithine and carbamoyl phosphate: step 2/3. This Shewanella sp. (strain W3-18-1) protein is Argininosuccinate synthase.